We begin with the raw amino-acid sequence, 1183 residues long: DNA-directed RNA polymerase subunit beta' (1183 aa).

Residues C60, C62, C75, and C78 each coordinate Zn(2+). 3 residues coordinate Mg(2+): D449, D451, and D453. The Zn(2+) site is built by C794, C867, C874, and C877.

This sequence belongs to the RNA polymerase beta' chain family. In terms of assembly, the RNAP catalytic core consists of 2 alpha, 1 beta, 1 beta' and 1 omega subunit. When a sigma factor is associated with the core the holoenzyme is formed, which can initiate transcription. Mg(2+) is required as a cofactor. The cofactor is Zn(2+).

It catalyses the reaction RNA(n) + a ribonucleoside 5'-triphosphate = RNA(n+1) + diphosphate. DNA-dependent RNA polymerase catalyzes the transcription of DNA into RNA using the four ribonucleoside triphosphates as substrates. In Caldanaerobacter subterraneus subsp. tengcongensis (strain DSM 15242 / JCM 11007 / NBRC 100824 / MB4) (Thermoanaerobacter tengcongensis), this protein is DNA-directed RNA polymerase subunit beta'.